The sequence spans 184 residues: Large ribosomal subunit protein uL6 (184 aa).

Belongs to the universal ribosomal protein uL6 family. Part of the 50S ribosomal subunit.

Its function is as follows. This protein binds to the 23S rRNA, and is important in its secondary structure. It is located near the subunit interface in the base of the L7/L12 stalk, and near the tRNA binding site of the peptidyltransferase center. This is Large ribosomal subunit protein uL6 from Thermococcus gammatolerans (strain DSM 15229 / JCM 11827 / EJ3).